The chain runs to 164 residues: Nitric oxide synthase, inducible (164 aa).

Phenylalanine 3 is a (6R)-L-erythro-5,6,7,8-tetrahydrobiopterin binding site. Position 18 (tyrosine 18) interacts with heme b. A calmodulin-binding region spans residues 42-62 (FKGLIRAVLFSQTLIKSALAK). One can recognise a Flavodoxin-like domain in the interval 66–164 (CTVLYATETG…SRMYPHFCAF (99 aa)). FMN-binding residues include threonine 72, glutamate 73, threonine 74, lysine 76, serine 77, serine 118, threonine 119, serine 155, and cysteine 162.

Belongs to the NOS family. In terms of assembly, homodimer. Requires heme b as cofactor. FAD serves as cofactor. It depends on FMN as a cofactor. (6R)-L-erythro-5,6,7,8-tetrahydrobiopterin is required as a cofactor.

Its subcellular location is the cytoplasm. The protein resides in the cytosol. The enzyme catalyses 2 L-arginine + 3 NADPH + 4 O2 + H(+) = 2 L-citrulline + 2 nitric oxide + 3 NADP(+) + 4 H2O. With respect to regulation, not stimulated by calcium/calmodulin. Produces nitric oxide (NO) which is a messenger molecule with diverse functions throughout the body. In macrophages, NO mediates tumoricidal and bactericidal actions. Also has nitrosylase activity and mediates cysteine S-nitrosylation of cytoplasmic target proteins such COX2. In Carassius auratus (Goldfish), this protein is Nitric oxide synthase, inducible (nos2).